Here is a 607-residue protein sequence, read N- to C-terminus: Zinc finger CCCH domain-containing protein 66 (607 aa).

ANK repeat units lie at residues 57–87 (EERT…DVNR) and 92–124 (DGAT…NPDS). The segment covering 161–178 (LNEVNGQEESEPEVEVEV) has biased composition (acidic residues). Positions 161 to 193 (LNEVNGQEESEPEVEVEVEVSPPRGSERKEYPV) are disordered. C3H1-type zinc fingers lie at residues 254-276 (PCPE…HGIF) and 284-308 (QYRT…HKPE). Residues 342 to 363 (ISPLPIGATTTPPLSPNGVSSP) form a disordered region. Polar residues predominate over residues 349-361 (ATTTPPLSPNGVS).

The sequence is that of Zinc finger CCCH domain-containing protein 66 from Arabidopsis thaliana (Mouse-ear cress).